The primary structure comprises 299 residues: GTPase Era (299 aa).

Positions 5 to 175 (RSGFVCLVGR…IDVLAAALPP (171 aa)) constitute an Era-type G domain. Residues 13–20 (GRPNTGKS) form a G1 region. A GTP-binding site is contributed by 13–20 (GRPNTGKS). The segment at 39–43 (QTTRH) is G2. Positions 60–63 (DTPG) are G3. GTP contacts are provided by residues 60-64 (DTPGL) and 124-127 (TKID). Residues 124–127 (TKID) are G4. Residues 154-156 (VSA) are G5. A KH type-2 domain is found at 206–285 (VRDELPHSLA…YLDLRVKVAK (80 aa)).

Belongs to the TRAFAC class TrmE-Era-EngA-EngB-Septin-like GTPase superfamily. Era GTPase family. In terms of assembly, monomer.

The protein resides in the cell envelope. It localises to the secreted. Its subcellular location is the cell wall. In terms of biological role, exhibits GTPase activity. Binds RNA but is probably not involved in ribosome assembly in mycobacteria. The sequence is that of GTPase Era from Mycobacterium avium (strain 104).